The chain runs to 764 residues: Hemocyte protein-glutamine gamma-glutamyltransferase (764 aa).

Active-site residues include cysteine 343, histidine 402, and aspartate 425. Ca(2+) contacts are provided by asparagine 465, aspartate 467, glutamate 522, and glutamate 527.

Belongs to the transglutaminase superfamily. Transglutaminase family. Requires Ca(2+) as cofactor. In terms of tissue distribution, mainly expressed in hemocytes, hepatopancreas, and gastric tissues. On the other hand nothing was detected in the heart, intestine and muscle.

It is found in the membrane. It carries out the reaction L-glutaminyl-[protein] + L-lysyl-[protein] = [protein]-L-lysyl-N(6)-5-L-glutamyl-[protein] + NH4(+). Functionally, catalyzes the cross-linking of proteins and the conjugation of polyamines to proteins. This is Hemocyte protein-glutamine gamma-glutamyltransferase from Tachypleus tridentatus (Japanese horseshoe crab).